The sequence spans 88 residues: CRISPR-associated endoribonuclease Cas2 2 (88 aa).

Aspartate 8 contacts Mg(2+).

The protein belongs to the CRISPR-associated endoribonuclease Cas2 protein family. As to quaternary structure, homodimer, forms a heterotetramer with a Cas1 homodimer. Requires Mg(2+) as cofactor.

CRISPR (clustered regularly interspaced short palindromic repeat), is an adaptive immune system that provides protection against mobile genetic elements (viruses, transposable elements and conjugative plasmids). CRISPR clusters contain sequences complementary to antecedent mobile elements and target invading nucleic acids. CRISPR clusters are transcribed and processed into CRISPR RNA (crRNA). Functions as a ssRNA-specific endoribonuclease. Involved in the integration of spacer DNA into the CRISPR cassette. The polypeptide is CRISPR-associated endoribonuclease Cas2 2 (cas22) (Saccharolobus solfataricus (strain ATCC 35092 / DSM 1617 / JCM 11322 / P2) (Sulfolobus solfataricus)).